The chain runs to 143 residues: Small ribosomal subunit protein uS11c (143 aa).

The protein belongs to the universal ribosomal protein uS11 family. Part of the 30S ribosomal subunit.

It localises to the plastid. The protein localises to the chloroplast. The sequence is that of Small ribosomal subunit protein uS11c from Brachypodium distachyon (Purple false brome).